The primary structure comprises 1103 residues: Mediator of RNA polymerase II transcription subunit 14 (1103 aa).

Disordered stretches follow at residues 22–61 (LNGVSSAPAGSSQLGNPVGLHNGSLPTNGVQHPDSRGSDE) and 1043–1067 (TTPKALDSRTSHDAPAANNQSPAIR). Polar residues predominate over residues 23–36 (NGVSSAPAGSSQLG).

The protein belongs to the Mediator complex subunit 14 family. Component of the Mediator complex.

The protein resides in the nucleus. Component of the Mediator complex, a coactivator involved in the regulated transcription of nearly all RNA polymerase II-dependent genes. Mediator functions as a bridge to convey information from gene-specific regulatory proteins to the basal RNA polymerase II transcription machinery. Mediator is recruited to promoters by direct interactions with regulatory proteins and serves as a scaffold for the assembly of a functional preinitiation complex with RNA polymerase II and the general transcription factors. The sequence is that of Mediator of RNA polymerase II transcription subunit 14 (rgr1) from Emericella nidulans (strain FGSC A4 / ATCC 38163 / CBS 112.46 / NRRL 194 / M139) (Aspergillus nidulans).